The primary structure comprises 250 residues: Acetylglutamate kinase (250 aa).

Substrate contacts are provided by residues glycine 41–glycine 42, arginine 63, and asparagine 156.

This sequence belongs to the acetylglutamate kinase family. ArgB subfamily.

It is found in the cytoplasm. It catalyses the reaction N-acetyl-L-glutamate + ATP = N-acetyl-L-glutamyl 5-phosphate + ADP. It functions in the pathway amino-acid biosynthesis; L-arginine biosynthesis; N(2)-acetyl-L-ornithine from L-glutamate: step 2/4. Its function is as follows. Catalyzes the ATP-dependent phosphorylation of N-acetyl-L-glutamate. The polypeptide is Acetylglutamate kinase (Listeria monocytogenes serovar 1/2a (strain ATCC BAA-679 / EGD-e)).